The sequence spans 285 residues: V-set and transmembrane domain-containing protein 2B (285 aa).

The first 28 residues, 1–28 (MEQRNRLGALGYLPPLLLHALLLFVADA), serve as a signal peptide directing secretion. The 115-residue stretch at 29 to 143 (AFTEVPKDVT…DDDTQEHKAQ (115 aa)) folds into the Ig-like V-type domain. Over 29-263 (AFTEVPKDVT…HGSGTGRSYT (235 aa)) the chain is Extracellular. Cysteines 49 and 127 form a disulfide. Residues 161-226 (EAVSHIQSSG…EAAAASAAHT (66 aa)) form a disordered region. Low complexity-rich tracts occupy residues 177-189 (ASAA…GAAS) and 208-226 (PAAI…AAHT). The chain crosses the membrane as a helical span at residues 264 to 284 (TDPLLSLLLLALHKFLRLLLG). A topological domain (cytoplasmic) is located at residue His-285.

The protein resides in the membrane. This is V-set and transmembrane domain-containing protein 2B (VSTM2B) from Homo sapiens (Human).